We begin with the raw amino-acid sequence, 444 residues long: Methylenetetrahydrofolate--tRNA-(uracil-5-)-methyltransferase TrmFO (444 aa).

An FAD-binding site is contributed by 10–15; it reads GAGLAG.

The protein belongs to the MnmG family. TrmFO subfamily. FAD is required as a cofactor.

It localises to the cytoplasm. It carries out the reaction uridine(54) in tRNA + (6R)-5,10-methylene-5,6,7,8-tetrahydrofolate + NADH + H(+) = 5-methyluridine(54) in tRNA + (6S)-5,6,7,8-tetrahydrofolate + NAD(+). The catalysed reaction is uridine(54) in tRNA + (6R)-5,10-methylene-5,6,7,8-tetrahydrofolate + NADPH + H(+) = 5-methyluridine(54) in tRNA + (6S)-5,6,7,8-tetrahydrofolate + NADP(+). Its function is as follows. Catalyzes the folate-dependent formation of 5-methyl-uridine at position 54 (M-5-U54) in all tRNAs. This chain is Methylenetetrahydrofolate--tRNA-(uracil-5-)-methyltransferase TrmFO, found in Streptococcus agalactiae serotype III (strain NEM316).